The primary structure comprises 876 residues: SED5-binding protein 2 (876 aa).

S51 bears the Phosphoserine mark. The zinc finger-like stretch occupies residues 164–189 (CRRCRSYMNPFVVFINQGRKWQCNIC). A compositionally biased stretch (acidic residues) spans 300–324 (VSDEDDEESDGEEEDEDEEEEDVDN). Positions 300 to 326 (VSDEDDEESDGEEEDEDEEEEDVDNSE) are disordered.

It belongs to the SEC23/SEC24 family. SEC24 subfamily. COPII is composed of at least five proteins: the SEC23/24 complex, the SEC13/31 complex and SAR1. Interacts with GRH1.

It is found in the cytoplasm. It localises to the golgi apparatus membrane. The protein localises to the endoplasmic reticulum membrane. In terms of biological role, component of the COPII coat, that covers ER-derived vesicles involved in transport from the endoplasmic reticulum to the Golgi apparatus. COPII acts in the cytoplasm to promote the transport of secretory, plasma membrane, and vacuolar proteins from the endoplasmic reticulum to the Golgi complex. The sequence is that of SED5-binding protein 2 (SFB2) from Saccharomyces cerevisiae (strain ATCC 204508 / S288c) (Baker's yeast).